Consider the following 368-residue polypeptide: 3-dehydroquinate synthase (368 aa).

NAD(+)-binding positions include 112–116, 136–137, Lys149, and Lys158; these read GVIGD and TT. Zn(2+) contacts are provided by Glu191, His256, and His273.

This sequence belongs to the sugar phosphate cyclases superfamily. Dehydroquinate synthase family. Co(2+) is required as a cofactor. Zn(2+) serves as cofactor. It depends on NAD(+) as a cofactor.

It localises to the cytoplasm. It carries out the reaction 7-phospho-2-dehydro-3-deoxy-D-arabino-heptonate = 3-dehydroquinate + phosphate. It functions in the pathway metabolic intermediate biosynthesis; chorismate biosynthesis; chorismate from D-erythrose 4-phosphate and phosphoenolpyruvate: step 2/7. Catalyzes the conversion of 3-deoxy-D-arabino-heptulosonate 7-phosphate (DAHP) to dehydroquinate (DHQ). This Prochlorococcus marinus (strain NATL1A) protein is 3-dehydroquinate synthase.